The following is a 548-amino-acid chain: MHKGKKNYPNLITSFRMNLKKIILNHDRFSHPERWKTNALLRFTFVYIKFLFDLMIIKNPLRMVGKTNRDAVTALNSLQSNYANIMAIRQTGDRKNTMTLLEMHEWSRRIGYSASDFNKLNIVHITGTKGKGSTAAFTSSILGQYKEQLPRIGLYTSPHLKSVRERIRINGEPISEEKFAKYFFEVWDRLDSTTSSLDKFPHMIPGSKPGYFKFLTLLSFHTFIQEDCKSCVYEVGVGGELDSTNIIEKPIVCGVTLLGIDHTFMLGDTIEEIAWNKGGIFKSGAPAFTVEKQPPQGLTILKERAEERKTTLTEVPPFKQLENVKLGIAGEFQKSNASLAVMLASEILHTSNILEEKIKCSSNASIPEKFIIGLQNTKWEGRCQVLEKGKNVWYIDGAHTKDSMVAASTWFRDMVRLSKRKKILLFNQQSRDANALVNNLYSSVSPEITFDDVIFTTNVTWKSGSYSADLVSMNTSQEDVEKLKVQESLVKNWNKIDDNRAKTHVTASIEEANELIETLYDEPADIFVTGSLHLVGGLLVVFDRIDVK.

Glycine 130–serine 133 is an ATP binding site. Positions 157, 234, and 262 each coordinate Mg(2+). ATP contacts are provided by arginine 382 and aspartate 396.

It belongs to the folylpolyglutamate synthase family. A monovalent cation serves as cofactor.

It is found in the mitochondrion inner membrane. The protein localises to the mitochondrion matrix. The protein resides in the cytoplasm. It carries out the reaction (6S)-5,6,7,8-tetrahydrofolyl-(gamma-L-Glu)(n) + L-glutamate + ATP = (6S)-5,6,7,8-tetrahydrofolyl-(gamma-L-Glu)(n+1) + ADP + phosphate + H(+). It functions in the pathway cofactor biosynthesis; tetrahydrofolylpolyglutamate biosynthesis. Its function is as follows. Catalyzes conversion of folates to polyglutamate derivatives allowing concentration of folate compounds in the cell and the intracellular retention of these cofactors, which are important substrates for most of the folate-dependent enzymes that are involved in one-carbon transfer reactions involved in purine, pyrimidine and amino acid synthesis. Required for methionine synthesis and maintenance of intact mitochondrial DNA. Involved in telomere maintenance. The chain is Folylpolyglutamate synthase from Saccharomyces cerevisiae (strain AWRI1631) (Baker's yeast).